Consider the following 124-residue polypeptide: Small ribosomal subunit protein uS13 (124 aa).

The segment covering lysine 93 to alanine 117 has biased composition (basic residues). Positions lysine 93–lysine 124 are disordered.

This sequence belongs to the universal ribosomal protein uS13 family. Part of the 30S ribosomal subunit. Forms a loose heterodimer with protein S19. Forms two bridges to the 50S subunit in the 70S ribosome.

Functionally, located at the top of the head of the 30S subunit, it contacts several helices of the 16S rRNA. In the 70S ribosome it contacts the 23S rRNA (bridge B1a) and protein L5 of the 50S subunit (bridge B1b), connecting the 2 subunits; these bridges are implicated in subunit movement. Contacts the tRNAs in the A and P-sites. The chain is Small ribosomal subunit protein uS13 from Mycoplasma genitalium (strain ATCC 33530 / DSM 19775 / NCTC 10195 / G37) (Mycoplasmoides genitalium).